The chain runs to 346 residues: Histidinol-phosphate aminotransferase (346 aa).

Residue lysine 209 is modified to N6-(pyridoxal phosphate)lysine.

Belongs to the class-II pyridoxal-phosphate-dependent aminotransferase family. Histidinol-phosphate aminotransferase subfamily. Homodimer. Pyridoxal 5'-phosphate serves as cofactor.

The catalysed reaction is L-histidinol phosphate + 2-oxoglutarate = 3-(imidazol-4-yl)-2-oxopropyl phosphate + L-glutamate. The protein operates within amino-acid biosynthesis; L-histidine biosynthesis; L-histidine from 5-phospho-alpha-D-ribose 1-diphosphate: step 7/9. This Aliivibrio fischeri (strain MJ11) (Vibrio fischeri) protein is Histidinol-phosphate aminotransferase.